Here is a 283-residue protein sequence, read N- to C-terminus: Elongation factor Ts (283 aa).

Positions 80 to 83 (TDFV) are involved in Mg(2+) ion dislocation from EF-Tu.

It belongs to the EF-Ts family.

Its subcellular location is the cytoplasm. Functionally, associates with the EF-Tu.GDP complex and induces the exchange of GDP to GTP. It remains bound to the aminoacyl-tRNA.EF-Tu.GTP complex up to the GTP hydrolysis stage on the ribosome. In Histophilus somni (strain 129Pt) (Haemophilus somnus), this protein is Elongation factor Ts.